The chain runs to 1337 residues: Sister chromatid cohesion protein PDS5 homolog A (1337 aa).

Met1 carries the N-acetylmethionine modification. The stretch at 393–429 is one HEAT repeat; that stretch reads ALVNDQLLGFVRERTLDKRWRVRKEAMMGLAQLYKKY. The residue at position 1097 (Ser1097) is a Phosphoserine. Lys1146 bears the N6-acetyllysine mark. The interval 1150 to 1337 is disordered; the sequence is ATGRKPYVRS…PAERQIDLQR (188 aa). A compositionally biased stretch (polar residues) spans 1159 to 1180; the sequence is STGTETGSNINVNSELNPSTGN. At Ser1195 the chain carries Phosphoserine. Thr1208 is subject to Phosphothreonine. Lys1211 carries the N6-acetyllysine modification. Positions 1223–1233 are enriched in polar residues; that stretch reads SDQATQGNISS. Lys1290 carries the N6-acetyllysine modification. The residue at position 1305 (Ser1305) is a Phosphoserine. The span at 1321-1337 shows a compositional bias: basic and acidic residues; that stretch reads DLAKKAAPAERQIDLQR.

It belongs to the PDS5 family. As to quaternary structure, interacts with the cohesin complex. Interacts with WAPL (via FGF motifs) or CDCA5 (via the FGF motif); the interaction is direct, cohesin-dependent and competitive. Interacts with SMC3. Interacts with TP63. In terms of tissue distribution, highest level in colon. Low levels in lung, ovary, breast and kidney. Reduced level in renal tumor tissue. Isoform 2 is expressed in kidney.

Its subcellular location is the nucleus. Probable regulator of sister chromatid cohesion in mitosis which may stabilize cohesin complex association with chromatin. May couple sister chromatid cohesion during mitosis to DNA replication. Cohesion ensures that chromosome partitioning is accurate in both meiotic and mitotic cells and plays an important role in DNA repair. This Homo sapiens (Human) protein is Sister chromatid cohesion protein PDS5 homolog A.